A 160-amino-acid chain; its full sequence is Lymphocyte antigen 96 (160 aa).

The signal sequence occupies residues 1-18 (MLPFLFFSTLFSSIFTEA). Intrachain disulfides connect C25–C51, C37–C148, and C95–C105. N26 is a glycosylation site (N-linked (GlcNAc...) asparagine). A glycan (N-linked (GlcNAc...) asparagine) is linked at N114. Positions 119–123 (FSFKG) are interaction with lipopolysaccharide.

In terms of assembly, heterogeneous homomer formed from homodimers; disulfide-linked. Belongs to the lipopolysaccharide (LPS) receptor, a multi-protein complex containing at least CD14, LY96 and TLR4. Binds to the extracellular domains of TLR2 and TLR4. Ligand binding induces interaction with TLR4 and oligomerization of the complex. N-glycosylated; high-mannose.

The protein localises to the secreted. Its subcellular location is the extracellular space. Its function is as follows. Binds bacterial lipopolysaccharide (LPS). Cooperates with TLR4 in the innate immune response to bacterial lipopolysaccharide (LPS), and with TLR2 in the response to cell wall components from Gram-positive and Gram-negative bacteria. Enhances TLR4-dependent activation of NF-kappa-B. Cells expressing both LY96 and TLR4, but not TLR4 alone, respond to LPS. This Homo sapiens (Human) protein is Lymphocyte antigen 96 (LY96).